The primary structure comprises 296 residues: Nucleotide-binding protein SUB0630 (296 aa).

Residue Gly-13–Thr-20 coordinates ATP. Asp-63–Ser-66 contacts GTP.

It belongs to the RapZ-like family.

In terms of biological role, displays ATPase and GTPase activities. The chain is Nucleotide-binding protein SUB0630 from Streptococcus uberis (strain ATCC BAA-854 / 0140J).